The sequence spans 210 residues: Large ribosomal subunit protein bL17 (210 aa).

Positions 177–210 (TRSAQRPAFEQDAPESDSAPEAEAKTEEETASAN) are disordered.

It belongs to the bacterial ribosomal protein bL17 family. In terms of assembly, part of the 50S ribosomal subunit. Contacts protein L32.

In Rhodopirellula baltica (strain DSM 10527 / NCIMB 13988 / SH1), this protein is Large ribosomal subunit protein bL17.